Here is a 287-residue protein sequence, read N- to C-terminus: Stomatin-like protein 3 (287 aa).

Position 3 is a phosphoserine (S3). A helical; Signal-anchor for type III membrane protein membrane pass occupies residues 25–45; that stretch reads WILFFLSFLLMLVTFPISVWM. Over 46-287 the chain is Cytoplasmic; it reads CLKIIKEYER…GNNKKVTAKA (242 aa). A Phosphoserine modification is found at S237.

The protein belongs to the band 7/mec-2 family. In terms of assembly, homodimer. Interacts with PIEZO1 and PIEZO2. Expressed by all dorsal root ganglion neurons and is selectively expressed in neuronal tissues. Detected in olfactory epithelium.

It is found in the cell membrane. In terms of biological role, required for the function of many mechanoreceptors. Modulate mechanotransduction channels and acid-sensing ion channels (ASIC) proteins. Potentiates PIEZO1 and PIEZO2 function by increasing their sensitivity to mechanical stimulations. The polypeptide is Stomatin-like protein 3 (Stoml3) (Mus musculus (Mouse)).